We begin with the raw amino-acid sequence, 240 residues long: Ribonuclease PH (240 aa).

Phosphate contacts are provided by residues R87 and 125 to 127 (GTR).

Belongs to the RNase PH family. As to quaternary structure, homohexameric ring arranged as a trimer of dimers.

It catalyses the reaction tRNA(n+1) + phosphate = tRNA(n) + a ribonucleoside 5'-diphosphate. Phosphorolytic 3'-5' exoribonuclease that plays an important role in tRNA 3'-end maturation. Removes nucleotide residues following the 3'-CCA terminus of tRNAs; can also add nucleotides to the ends of RNA molecules by using nucleoside diphosphates as substrates, but this may not be physiologically important. Probably plays a role in initiation of 16S rRNA degradation (leading to ribosome degradation) during starvation. The polypeptide is Ribonuclease PH (Pseudomonas fluorescens (strain ATCC BAA-477 / NRRL B-23932 / Pf-5)).